The chain runs to 479 residues: Polyadenylate-binding protein-interacting protein 1 (479 aa).

The interval 1–114 is disordered; the sequence is MSDGFDRAPG…PQQNSESAMA (114 aa). Position 2 is an N-acetylalanine (Ser2). Gly residues predominate over residues 11–33; that stretch reads AGRGRSRGLGRGGGGPEGGGFPN. Arg21 bears the Omega-N-methylarginine mark. Pro residues predominate over residues 45 to 69; sequence PPQPKAPGFLQPPPLRQPRTTPPPG. Polar residues predominate over residues 98-111; sequence PSSQDKIPQQNSES. Residues 116-143 are PABPC1-interacting motif-2 (PAM2); it reads PQVVVAPVLMSKLSVNAPEFYPSGYSSS. Residues 157 to 375 form a PAIP1 middle domain (PAIP1M) region; sequence TLSEYVQDFL…LLKLVELRSS (219 aa). Residues 159-376 enclose the MIF4G domain; the sequence is SEYVQDFLNH…LKLVELRSSN (218 aa). The interval 435–455 is disordered; the sequence is DYEENGTDLSGAGDPYLDDID. Residues 440-479 form a PABPC1-interacting motif-1 (PAM1) region; sequence GTDLSGAGDPYLDDIDDEMDPEIEEAYEKFCLESERKRKQ.

As to quaternary structure, interacts with the RRM1-RRM2 and C-terminus regions of PABPC1 in a 1:1 stoichiometry. Interacts with EIF4A. (Microbial infection) Interacts (via PAIP1M) with human SARS coronaviruses SARS-COV and SARS-COV-2 NSP3 protein (via SARS-unique domain); the interaction increases binding affinity with PABPC1.

Its subcellular location is the cytoplasm. Its function is as follows. Acts as a coactivator in the regulation of translation initiation of poly(A)-containing mRNAs. Its stimulatory activity on translation is mediated via its action on PABPC1. Competes with PAIP2 for binding to PABPC1. Its association with EIF4A and PABPC1 may potentiate contacts between mRNA termini. May also be involved in translationally coupled mRNA turnover. Implicated with other RNA-binding proteins in the cytoplasmic deadenylation/translational and decay interplay of the FOS mRNA mediated by the major coding-region determinant of instability (mCRD) domain. (Microbial infection) Upon interaction with SARS coronavirus SARS-CoV NSP3 protein, plays an important role in viral protein synthesis. This is Polyadenylate-binding protein-interacting protein 1 from Homo sapiens (Human).